The chain runs to 344 residues: AA9 family lytic polysaccharide monooxygenase J (344 aa).

Positions 1 to 20 are cleaved as a signal peptide; that stretch reads MKSSLLVVLTAGLAVRDAIA. Cu(2+) contacts are provided by His-21 and His-99. Cys-58 and Cys-194 form a disulfide bridge. Residues His-180 and Gln-189 each coordinate O2. Tyr-191 serves as a coordination point for Cu(2+). Positions 272–301 are disordered; that stretch reads PGGKPASGGSDGNAPEVAEPSGGEGSPSAP. A compositionally biased stretch (low complexity) spans 285–301; it reads APEVAEPSGGEGSPSAP. The CBM1 domain occupies 304 to 341; sequence CEVAAYGQCGGDQYSGCTQCASGYTCKAVSPPYYSQCA.

This sequence belongs to the polysaccharide monooxygenase AA9 family. The cofactor is Cu(2+).

It is found in the secreted. It carries out the reaction [(1-&gt;4)-beta-D-glucosyl]n+m + reduced acceptor + O2 = 4-dehydro-beta-D-glucosyl-[(1-&gt;4)-beta-D-glucosyl]n-1 + [(1-&gt;4)-beta-D-glucosyl]m + acceptor + H2O.. Lytic polysaccharide monooxygenase (LPMO) that depolymerizes crystalline and amorphous polysaccharides via the oxidation of scissile alpha- or beta-(1-4)-glycosidic bonds, yielding C4 oxidation products. Catalysis by LPMOs requires the reduction of the active-site copper from Cu(II) to Cu(I) by a reducing agent and H(2)O(2) or O(2) as a cosubstrate. This Neurospora crassa (strain ATCC 24698 / 74-OR23-1A / CBS 708.71 / DSM 1257 / FGSC 987) protein is AA9 family lytic polysaccharide monooxygenase J (gh61-10).